The primary structure comprises 205 residues: MKNYHDIVLALAGVCQSAKLVHQLATESRADSETFLTALNSLFITQPQRIEDVFGGEVRHLKLGLETLIHQLNAQGDQNLTRYWLSLLALEGKLSKNSDAKQTLGNRISRLKEQEIHYARDSETMLSIMANIYSDIISPLGKKIHILGSPDYLRQELVQNKIRAVLLAGIRSAVLWKQMGGTKWQILFFRRKLLATAKQIYSSIY.

The protein belongs to the HflD family.

It localises to the cytoplasm. The protein localises to the cell inner membrane. This Haemophilus influenzae (strain ATCC 51907 / DSM 11121 / KW20 / Rd) protein is High frequency lysogenization protein HflD homolog.